A 512-amino-acid chain; its full sequence is Reduced folate transporter (512 aa).

Met-1 is modified (N-acetylmethionine). Residues 1–29 lie on the Cytoplasmic side of the membrane; it reads MVPTGQVAEKQACEEPRQDRELKSWRWLV. Residues 30–50 form a helical membrane-spanning segment; that stretch reads FYLCFFGFMAQLRPGESFITP. Positions 48 and 49 each coordinate folate. Residues 51–62 are Extracellular-facing; it reads YLLERNFTKEQV. The N-linked (GlcNAc...) asparagine glycan is linked to Asn-56. The chain crosses the membrane as a helical span at residues 63 to 85; the sequence is TNEIIPMLPYSHLAVLVPIFLLT. Over 86–89 the chain is Cytoplasmic; it reads DYLR. The chain crosses the membrane as a helical span at residues 90-110; sequence YKPVLVLQCLSFVCVWLLLLL. The Extracellular segment spans residues 111-114; that stretch reads GTSV. A helical transmembrane segment spans residues 115–137; it reads VHMQLMEVFYSITMAARIAYSSY. Glu-121 and Arg-131 together coordinate folate. The Cytoplasmic segment spans residues 138 to 151; that stretch reads IFSLVQPSRYQRMA. Residues 152–176 traverse the membrane as a helical segment; the sequence is SYSRAAVLLGVFISSVLGQVLVTLG. Val-162 is a folate binding site. Over 177–181 the chain is Extracellular; the sequence is GISTY. Residues 182–200 traverse the membrane as a helical segment; the sequence is MLNCISLGFILFSLSLSLF. The Cytoplasmic portion of the chain corresponds to 201-266; the sequence is LKRPKRSLFF…ELVKNVRQPQ (66 aa). The chain crosses the membrane as a helical span at residues 267–292; sequence LRLWCLWWVFNSAGYYLITYYVHVLW. Residues Tyr-281, Tyr-282, and Tyr-286 each contribute to the folate site. Over 293–300 the chain is Extracellular; that stretch reads KITDSRLN. The helical transmembrane segment at 301 to 323 threads the bilayer; it reads YNGAVDAASTLLSAITAFTAGFV. Topologically, residues 324–329 are cytoplasmic; that stretch reads NIRWAL. Residues 330-350 traverse the membrane as a helical segment; it reads WSKLVIASVIAIQAGLVFCMF. Residues 351 to 353 lie on the Extracellular side of the membrane; sequence QIP. A helical membrane pass occupies residues 354–377; that stretch reads DIWVCYVTFVLFRGAYQFLVPIAT. 2 residues coordinate folate: Arg-366 and Gln-370. Residues 378–391 lie on the Cytoplasmic side of the membrane; that stretch reads FQIASSLSKELCAL. Residues 392–415 form a helical membrane-spanning segment; sequence VFGINTFLATALKTSITLVVSDKR. Residues 400-412 form a required for substrate-binding region; it reads ATALKTSITLVVS. The Extracellular portion of the chain corresponds to 416 to 423; that stretch reads GLGLQVHQ. A helical membrane pass occupies residues 424-448; that stretch reads QFRIYFMYFLTLSIICLAWAGLDGL. At 449–512 the chain is on the cytoplasmic side; the sequence is RYYRRGRHQP…RADLRVEAKA (64 aa). 3 positions are modified to phosphoserine: Ser-466, Ser-471, and Ser-476. The segment at 479-512 is disordered; sequence DGDLRRPQPSAPQLLPEDGSVEDGRADLRVEAKA. The segment covering 500 to 512 has biased composition (basic and acidic residues); that stretch reads EDGRADLRVEAKA.

Belongs to the reduced folate carrier (RFC) transporter (TC 2.A.48) family. As to expression, expressed in liver, heart, brain, spleen, lung and skeletal muscle.

It is found in the cell membrane. It localises to the apical cell membrane. The protein localises to the basolateral cell membrane. It catalyses the reaction 5-amino-1-(5-phospho-beta-D-ribosyl)imidazole-4-carboxamide(in) + (6S)-5-methyl-5,6,7,8-tetrahydrofolate(out) = 5-amino-1-(5-phospho-beta-D-ribosyl)imidazole-4-carboxamide(out) + (6S)-5-methyl-5,6,7,8-tetrahydrofolate(in). Its function is as follows. Antiporter that mediates the import of reduced folates, driven by the export of organic anions. Also acts as an importer of immunoreactive cyclic dinucleotides, but with a lower transporter activity. Mechanistically, acts as a secondary active transporter, which exports intracellular organic anions down their concentration gradients to facilitate the uptake of its substrates. Has high affinity for N5-methyltetrahydrofolate, the predominant circulating form of folate. Also mediates the import of antifolate drug methotrexate. 5-amino-4-imidazolecarboxamide riboside (AICAR), when phosphorylated to AICAR monophosphate, can serve as an organic anion for antiporter activity. The chain is Reduced folate transporter from Rattus norvegicus (Rat).